Consider the following 424-residue polypeptide: Na(+)/H(+) antiporter NhaA (424 aa).

Helical transmembrane passes span Ile-23–Leu-43, Val-65–Ile-85, Leu-102–Val-122, Gly-131–Gly-151, Leu-160–Phe-180, Ala-183–Cys-203, Leu-211–His-231, Ala-265–Val-285, Ile-303–Val-323, Ala-341–Phe-361, and Ile-373–Ala-393.

This sequence belongs to the NhaA Na(+)/H(+) (TC 2.A.33) antiporter family.

The protein resides in the cell inner membrane. It carries out the reaction Na(+)(in) + 2 H(+)(out) = Na(+)(out) + 2 H(+)(in). Its function is as follows. Na(+)/H(+) antiporter that extrudes sodium in exchange for external protons. The protein is Na(+)/H(+) antiporter NhaA of Sphingopyxis alaskensis (strain DSM 13593 / LMG 18877 / RB2256) (Sphingomonas alaskensis).